The chain runs to 245 residues: Uridylate kinase (245 aa).

15 to 18 (KLSG) contacts ATP. Residues 23 to 28 (GDEGFG) are involved in allosteric activation by GTP. Gly-57 is a UMP binding site. The ATP site is built by Gly-58 and Arg-62. Residues Asp-77 and 138–145 (TGNPFCTT) each bind UMP. Residues Thr-165, Tyr-171, and Asp-174 each coordinate ATP.

Belongs to the UMP kinase family. Homohexamer.

It localises to the cytoplasm. The catalysed reaction is UMP + ATP = UDP + ADP. Its pathway is pyrimidine metabolism; CTP biosynthesis via de novo pathway; UDP from UMP (UMPK route): step 1/1. With respect to regulation, allosterically activated by GTP. Inhibited by UTP. Functionally, catalyzes the reversible phosphorylation of UMP to UDP. The protein is Uridylate kinase of Shewanella sp. (strain W3-18-1).